Reading from the N-terminus, the 442-residue chain is tRNA modification GTPase MnmE (442 aa).

Positions 24, 84, and 124 each coordinate (6S)-5-formyl-5,6,7,8-tetrahydrofolate. Residues 218–366 (GARVALFGPV…LRDDMLGRLW (149 aa)) enclose the TrmE-type G domain. Residues 228–233 (NAGKST), 247–253 (DDEPGTT), and 272–275 (DTAG) contribute to the GTP site. 2 residues coordinate Mg(2+): Ser232 and Thr253. A (6S)-5-formyl-5,6,7,8-tetrahydrofolate-binding site is contributed by Lys442.

This sequence belongs to the TRAFAC class TrmE-Era-EngA-EngB-Septin-like GTPase superfamily. TrmE GTPase family. As to quaternary structure, homodimer. Heterotetramer of two MnmE and two MnmG subunits. Requires K(+) as cofactor.

It localises to the cytoplasm. Its function is as follows. Exhibits a very high intrinsic GTPase hydrolysis rate. Involved in the addition of a carboxymethylaminomethyl (cmnm) group at the wobble position (U34) of certain tRNAs, forming tRNA-cmnm(5)s(2)U34. The chain is tRNA modification GTPase MnmE from Myxococcus xanthus (strain DK1622).